The sequence spans 388 residues: L-lactate dehydrogenase (388 aa).

One can recognise an FMN hydroxy acid dehydrogenase domain in the interval 1–380 (MIISSSSDYR…SRDSLVREIE (380 aa)). A substrate-binding site is contributed by Tyr-24. 2 residues coordinate FMN: Ser-106 and Gln-127. Tyr-129 contacts substrate. Residue Thr-155 participates in FMN binding. Arg-164 contacts substrate. Lys-251 is a binding site for FMN. The Proton acceptor role is filled by His-275. Arg-278 lines the substrate pocket. 306 to 330 (DSGIRSGLDVVRMLAQGADGVLLGR) contributes to the FMN binding site.

The protein belongs to the FMN-dependent alpha-hydroxy acid dehydrogenase family. The cofactor is FMN.

It is found in the cell inner membrane. The catalysed reaction is (S)-lactate + A = pyruvate + AH2. Catalyzes the conversion of L-lactate to pyruvate. Is coupled to the respiratory chain. This is L-lactate dehydrogenase from Xanthobacter autotrophicus (strain ATCC BAA-1158 / Py2).